Consider the following 163-residue polypeptide: Probable cobalt-precorrin-6B C(15)-methyltransferase (decarboxylating) (163 aa).

S-adenosyl-L-methionine is bound by residues Thr6, 30–34 (GCGSG), Asp51, and Gly75.

This sequence belongs to the methyltransferase superfamily. Archaeal-type CbiT family.

It catalyses the reaction Co-precorrin-6B + S-adenosyl-L-methionine = Co-precorrin-7 + S-adenosyl-L-homocysteine + CO2. It functions in the pathway cofactor biosynthesis; adenosylcobalamin biosynthesis; cob(II)yrinate a,c-diamide from sirohydrochlorin (anaerobic route): step 8/10. Catalyzes the methylation of C-15 in cobalt-precorrin-6B followed by the decarboxylation of C-12 to form cobalt-precorrin-7. This Archaeoglobus fulgidus (strain ATCC 49558 / DSM 4304 / JCM 9628 / NBRC 100126 / VC-16) protein is Probable cobalt-precorrin-6B C(15)-methyltransferase (decarboxylating).